The chain runs to 399 residues: MAREKFERNKPHVNIGTIGHVDHGKTTLTAAITNVLAKKGQAQVQNYADIDGAPEERERGITINTAHVEYETDTRHYAHVDCPGHADYVKNMITGAAQMDGAILVCAATDGPMAQTKEHILLAKQVGVPALVVALNKCDMVDDEELIELVEMEIRELLSSYDFPGDDIPVVQVSGLKAIEGEAEWEAKIDELMAAVDANIPEPVREVDKPFLMAVEDVFSITGRGTVATGRIERGIVKVGEEIEIVGIKDTRKSTVTGVEMFRKLLDEGMAGDNVGLLLRGIQKEDIERGMVLVKPGSITPHTKFEGEVYVLKKEEGGRHTPFFAGYRPQFYIRTTDVTGQITAFTDRDGGNVEMVMPGDNIKMTGELICPVAIEQGMRFAIREGGRTIGAGVVTKIIE.

In terms of domain architecture, tr-type G spans 10-204 (KPHVNIGTIG…AVDANIPEPV (195 aa)). The interval 19 to 26 (GHVDHGKT) is G1. Residue 19-26 (GHVDHGKT) participates in GTP binding. Threonine 26 provides a ligand contact to Mg(2+). The interval 60–64 (GITIN) is G2. The segment at 81-84 (DCPG) is G3. GTP-binding positions include 81-85 (DCPGH) and 136-139 (NKCD). Residues 136–139 (NKCD) form a G4 region. Positions 174-176 (SGL) are G5.

Belongs to the TRAFAC class translation factor GTPase superfamily. Classic translation factor GTPase family. EF-Tu/EF-1A subfamily. Monomer.

It is found in the cytoplasm. The enzyme catalyses GTP + H2O = GDP + phosphate + H(+). Its function is as follows. GTP hydrolase that promotes the GTP-dependent binding of aminoacyl-tRNA to the A-site of ribosomes during protein biosynthesis. This Synechococcus sp. (strain RCC307) protein is Elongation factor Tu.